A 296-amino-acid polypeptide reads, in one-letter code: Cell division protein DivIB (296 aa).

At 1-25 (MMEDKIIHTPRFDEQRRMRRKKRQR) the chain is on the cytoplasmic side. A helical transmembrane segment spans residues 26–46 (LQLFIFLSIVAIVSLILIYMF). Residues 47-296 (TSISYVKKIS…KELNQVKKNS (250 aa)) are Extracellular-facing. Residues 50-118 (SYVKKISVND…NTVSINVEEY (69 aa)) enclose the POTRA domain.

This sequence belongs to the FtsQ/DivIB family. DivIB subfamily.

It is found in the cell membrane. Cell division protein that may be involved in stabilizing or promoting the assembly of the division complex. This Macrococcus caseolyticus (strain JCSC5402) (Macrococcoides caseolyticum) protein is Cell division protein DivIB.